Here is a 190-residue protein sequence, read N- to C-terminus: Tereporin-Ca1 (190 aa).

The segment at 2 to 21 (TAGSSLAGTTLSGLAASGYR) is N-terminal region. Phosphocholine-binding residues include Gly78, Ser96, Pro98, Tyr131, and Tyr132. Residues 138–140 (KGE) carry the Cell attachment site, crucial for protein stability motif.

This sequence belongs to the actinoporin family. Conoidea subfamily. As to quaternary structure, octamer or nonamer in membranes. Monomer in the soluble state. In terms of tissue distribution, expressed by the venom duct.

It localises to the secreted. Its subcellular location is the nematocyst. It is found in the target cell membrane. In terms of biological role, pore-forming protein that forms pores of around 1 nm and causes cardiac stimulation and cytolysis. This chain is Tereporin-Ca1, found in Terebra anilis (Auger snail).